The chain runs to 254 residues: uncharacterized protein (254 aa).

The region spanning 14-81 (IRLQKVLSQA…DSLVYLALNK (68 aa)) is the S4 RNA-binding domain. D119 (nucleophile) is an active-site residue.

Belongs to the pseudouridine synthase RsuA family.

The catalysed reaction is a uridine in RNA = a pseudouridine in RNA. This is an uncharacterized protein from Mycobacterium bovis (strain ATCC BAA-935 / AF2122/97).